The following is a 304-amino-acid chain: Bacteriochlorophyll synthase 33 kDa chain (304 aa).

The next 9 helical transmembrane spans lie at 26-46, 51-71, 94-114, 117-137, 151-171, 178-198, 227-247, 250-270, and 279-299; these read VTWF…NVPI, GVVV…SQAA, IPGL…LVVG, LGSW…AYSV, GLVG…VLLA, GFPI…IMTI, IACT…YLFS, YHAT…SVWM, and WYNG…AFAI.

The protein resides in the cell membrane. It functions in the pathway porphyrin-containing compound metabolism; bacteriochlorophyll biosynthesis (light-independent). Functionally, catalyzes the esterification of bacteriochlorophyllide a by geranylgeraniol-PPi. In Rhodobacter capsulatus (strain ATCC BAA-309 / NBRC 16581 / SB1003), this protein is Bacteriochlorophyll synthase 33 kDa chain (bchG).